The sequence spans 157 residues: Transcription elongation factor GreA (157 aa).

The stretch at Ala-46 to Glu-73 forms a coiled coil.

Belongs to the GreA/GreB family.

In terms of biological role, necessary for efficient RNA polymerase transcription elongation past template-encoded arresting sites. The arresting sites in DNA have the property of trapping a certain fraction of elongating RNA polymerases that pass through, resulting in locked ternary complexes. Cleavage of the nascent transcript by cleavage factors such as GreA or GreB allows the resumption of elongation from the new 3'terminus. GreA releases sequences of 2 to 3 nucleotides. This chain is Transcription elongation factor GreA, found in Acidiphilium cryptum (strain JF-5).